Consider the following 223-residue polypeptide: Endonuclease V (223 aa).

Mg(2+)-binding residues include aspartate 35 and aspartate 103.

It belongs to the endonuclease V family. The cofactor is Mg(2+).

It localises to the cytoplasm. It carries out the reaction Endonucleolytic cleavage at apurinic or apyrimidinic sites to products with a 5'-phosphate.. Its function is as follows. DNA repair enzyme involved in the repair of deaminated bases. Selectively cleaves double-stranded DNA at the second phosphodiester bond 3' to a deoxyinosine leaving behind the intact lesion on the nicked DNA. The protein is Endonuclease V of Salmonella agona (strain SL483).